The sequence spans 132 residues: Small ribosomal subunit protein uS11 (132 aa).

The protein belongs to the universal ribosomal protein uS11 family. In terms of assembly, part of the 30S ribosomal subunit. Interacts with proteins S7 and S18. Binds to IF-3.

Its function is as follows. Located on the platform of the 30S subunit, it bridges several disparate RNA helices of the 16S rRNA. Forms part of the Shine-Dalgarno cleft in the 70S ribosome. This chain is Small ribosomal subunit protein uS11, found in Chlamydia trachomatis serovar D (strain ATCC VR-885 / DSM 19411 / UW-3/Cx).